We begin with the raw amino-acid sequence, 65 residues long: Ferredoxin soy (65 aa).

The 4Fe-4S ferredoxin-type domain occupies 2 to 29 (GVQVDKERCVGAGMCALTAPDVFTQDDD). Cysteine 10, cysteine 16, and cysteine 55 together coordinate [3Fe-4S] cluster.

The cofactor is [3Fe-4S] cluster.

Functionally, electron transport protein for the cytochrome P-450-SOY system. The protein is Ferredoxin soy (soyB) of Streptomyces griseus.